The chain runs to 330 residues: CRISPR-associated endonuclease Cas1 2 (330 aa).

Mn(2+)-binding residues include E156, H222, and E237.

This sequence belongs to the CRISPR-associated endonuclease Cas1 family. In terms of assembly, homodimer, forms a heterotetramer with a Cas2 homodimer. It depends on Mg(2+) as a cofactor. Mn(2+) is required as a cofactor.

Functionally, CRISPR (clustered regularly interspaced short palindromic repeat), is an adaptive immune system that provides protection against mobile genetic elements (viruses, transposable elements and conjugative plasmids). CRISPR clusters contain spacers, sequences complementary to antecedent mobile elements, and target invading nucleic acids. CRISPR clusters are transcribed and processed into CRISPR RNA (crRNA). Acts as a dsDNA endonuclease. Involved in the integration of spacer DNA into the CRISPR cassette. The protein is CRISPR-associated endonuclease Cas1 2 of Thermodesulfovibrio yellowstonii (strain ATCC 51303 / DSM 11347 / YP87).